Consider the following 286-residue polypeptide: ATP synthase gamma chain (286 aa).

This sequence belongs to the ATPase gamma chain family. In terms of assembly, F-type ATPases have 2 components, CF(1) - the catalytic core - and CF(0) - the membrane proton channel. CF(1) has five subunits: alpha(3), beta(3), gamma(1), delta(1), epsilon(1). CF(0) has three main subunits: a, b and c.

The protein localises to the cell inner membrane. Produces ATP from ADP in the presence of a proton gradient across the membrane. The gamma chain is believed to be important in regulating ATPase activity and the flow of protons through the CF(0) complex. This is ATP synthase gamma chain from Alteromonas mediterranea (strain DSM 17117 / CIP 110805 / LMG 28347 / Deep ecotype).